The chain runs to 106 residues: uncharacterized protein (106 aa).

The protein to the N-terminal of E.carotovora exoenzyme regulation regulon ORF1. The C-terminal part is colinear with YqcB. This sequence to E.coli YqcC.

This is an uncharacterized protein from Haemophilus influenzae (strain ATCC 51907 / DSM 11121 / KW20 / Rd).